The chain runs to 939 residues: AP-2 complex subunit alpha-2 (939 aa).

Residues 11 to 12 (RG), K43, Y53, and 57 to 61 (KYVCK) contribute to the a 1,2-diacyl-sn-glycero-3-phospho-(1D-myo-inositol-3,4,5-trisphosphate) site. Residues 612–681 (LAKLKKKKGP…AGPPPSSGGS (70 aa)) form a disordered region. Positions 646-667 (PASTSAVSTPSPSADLLGLGAA) are enriched in low complexity. A compositionally biased stretch (pro residues) spans 668-677 (PPAPAGPPPS).

The protein belongs to the adaptor complexes large subunit family. As to quaternary structure, adaptor protein complex 2 (AP-2) is a heterotetramer composed of two large adaptins (alpha-type subunit AP2A1 or AP2A2 and beta-type subunit AP2B1), a medium adaptin (mu-type subunit AP2M1) and a small adaptin (sigma-type subunit AP2S1). Binds EPN1, EPS15, AMPH, SNAP91 and BIN1. Interacts with HIP1. Interacts with DGKD. Interacts with DENND1A, DENND1B and DENND1C. Interacts with FCHO1 and DAB2. Interacts with ATAT1; this interaction is required for efficient alpha-tubulin acetylation by ATAT1. Interacts with KIAA1107. Together with AP2B1 and AP2M1, it interacts with ADAM10; this interaction facilitates ADAM10 endocytosis from the plasma membrane during long-term potentiation in hippocampal neurons. Interacts with CLN3 (via dileucine motif). Interacts with ABCB11; this interaction regulates cell membrane expression of ABCB11 through its internalization in a clathrin-dependent manner and its subsequent degradation. Interacts with Cacfd1. Interacts with DNAJC6. In terms of tissue distribution, expressed in the brain (at protein level).

It is found in the cell membrane. Its subcellular location is the membrane. The protein localises to the coated pit. Functionally, component of the adaptor protein complex 2 (AP-2). Adaptor protein complexes function in protein transport via transport vesicles in different membrane traffic pathways. Adaptor protein complexes are vesicle coat components and appear to be involved in cargo selection and vesicle formation. AP-2 is involved in clathrin-dependent endocytosis in which cargo proteins are incorporated into vesicles surrounded by clathrin (clathrin-coated vesicles, CCVs) which are destined for fusion with the early endosome. The clathrin lattice serves as a mechanical scaffold but is itself unable to bind directly to membrane components. Clathrin-associated adaptor protein (AP) complexes which can bind directly to both the clathrin lattice and to the lipid and protein components of membranes are considered to be the major clathrin adaptors contributing the CCV formation. AP-2 also serves as a cargo receptor to selectively sort the membrane proteins involved in receptor-mediated endocytosis. AP-2 seems to play a role in the recycling of synaptic vesicle membranes from the presynaptic surface. AP-2 recognizes Y-X-X-[FILMV] (Y-X-X-Phi) and [ED]-X-X-X-L-[LI] endocytosis signal motifs within the cytosolic tails of transmembrane cargo molecules. AP-2 may also play a role in maintaining normal post-endocytic trafficking through the ARF6-regulated, non-clathrin pathway. During long-term potentiation in hippocampal neurons, AP-2 is responsible for the endocytosis of ADAM10. The AP-2 alpha subunit binds polyphosphoinositide-containing lipids, positioning AP-2 on the membrane. The AP-2 alpha subunit acts via its C-terminal appendage domain as a scaffolding platform for endocytic accessory proteins. The AP-2 alpha and AP-2 sigma subunits are thought to contribute to the recognition of the [ED]-X-X-X-L-[LI] motif. This is AP-2 complex subunit alpha-2 (AP2A2) from Homo sapiens (Human).